A 464-amino-acid chain; its full sequence is Phospho-2-dehydro-3-deoxyheptonate aldolase AroG (464 aa).

Cys87 contacts Mn(2+). Residues Arg126, Glu285–Arg286, Lys308, and Arg339 contribute to the phosphoenolpyruvate site. The Mn(2+) site is built by His371, Glu413, and Asp443.

This sequence belongs to the class-II DAHP synthase family. In terms of assembly, homodimer. Probably interacts with MSMEG_5536. The cofactor is Mn(2+). Co(2+) serves as cofactor. Cd(2+) is required as a cofactor.

It carries out the reaction D-erythrose 4-phosphate + phosphoenolpyruvate + H2O = 7-phospho-2-dehydro-3-deoxy-D-arabino-heptonate + phosphate. It functions in the pathway metabolic intermediate biosynthesis; chorismate biosynthesis; chorismate from D-erythrose 4-phosphate and phosphoenolpyruvate: step 1/7. Functionally, catalyzes an aldol-like condensation reaction between phosphoenolpyruvate (PEP) and D-erythrose 4-phosphate (E4P) to generate 3-deoxy-D-arabino-heptulosonate 7-phosphate (DAH7P) and inorganic phosphate. The protein is Phospho-2-dehydro-3-deoxyheptonate aldolase AroG (aroG) of Mycolicibacterium smegmatis (strain ATCC 700084 / mc(2)155) (Mycobacterium smegmatis).